The primary structure comprises 216 residues: Vesicle-associated membrane protein 7A (216 aa).

The Cytoplasmic segment spans residues 1–189 (MSQTDILYAC…KRKLWWQNKK (189 aa)). In terms of domain architecture, Longin spans 6–112 (ILYACVSYKG…ATYDPFIRVL (107 aa)). The v-SNARE coiled-coil homology domain maps to 126 to 186 (KMNLVMDQVS…VALKRKLWWQ (61 aa)). Residues 190 to 210 (LAIAIGLVVCILIAVITLALL) form a helical; Anchor for type IV membrane protein membrane-spanning segment. Over 211–216 (KYFKVI) the chain is Vesicular.

The protein belongs to the synaptobrevin family. As to quaternary structure, component of the SNARE complex composed of syn7A, syn8A, vamp7A and vti1A.

It localises to the cytoplasmic vesicle. The protein localises to the secretory vesicle membrane. It is found in the golgi apparatus. Its subcellular location is the trans-Golgi network membrane. The protein resides in the late endosome membrane. It localises to the lysosome membrane. The protein localises to the endoplasmic reticulum membrane. It is found in the phagosome membrane. Functionally, involved in the targeting and/or fusion of transport vesicles to their target membrane during transport of proteins from the early endosome to the lysosome. Required for heterotypic fusion of late endosomes with lysosomes and homotypic lysosomal fusion. Required for calcium regulated lysosomal exocytosis. The chain is Vesicle-associated membrane protein 7A from Dictyostelium discoideum (Social amoeba).